The following is a 345-amino-acid chain: Sulfate/thiosulfate import ATP-binding protein CysA (345 aa).

The ABC transporter domain maps to 3–237 (IQVSGLCKHF…PRTEFVYQFV (235 aa)). 35–42 (GPSGCGKT) contributes to the ATP binding site.

The protein belongs to the ABC transporter superfamily. Sulfate/tungstate importer (TC 3.A.1.6) family. As to quaternary structure, the complex is composed of two ATP-binding proteins (CysA), two transmembrane proteins (CysT and CysW) and a solute-binding protein (CysP).

Its subcellular location is the cell inner membrane. It catalyses the reaction sulfate(out) + ATP + H2O = sulfate(in) + ADP + phosphate + H(+). The catalysed reaction is thiosulfate(out) + ATP + H2O = thiosulfate(in) + ADP + phosphate + H(+). Its function is as follows. Part of the ABC transporter complex CysAWTP involved in sulfate/thiosulfate import. Responsible for energy coupling to the transport system. In Vibrio vulnificus (strain CMCP6), this protein is Sulfate/thiosulfate import ATP-binding protein CysA.